Consider the following 492-residue polypeptide: Cysteine--tRNA ligase (492 aa).

Cysteine 31 contacts Zn(2+). The short motif at 33 to 43 is the 'HIGH' region element; the sequence is PTVYGDPHLGH. 3 residues coordinate Zn(2+): cysteine 226, histidine 251, and glutamate 255. Positions 283–287 match the 'KMSKS' region motif; sequence KMGKS. Position 286 (lysine 286) interacts with ATP.

The protein belongs to the class-I aminoacyl-tRNA synthetase family. Monomer. Zn(2+) serves as cofactor.

The protein localises to the cytoplasm. It carries out the reaction tRNA(Cys) + L-cysteine + ATP = L-cysteinyl-tRNA(Cys) + AMP + diphosphate. The sequence is that of Cysteine--tRNA ligase from Azobacteroides pseudotrichonymphae genomovar. CFP2.